The following is a 164-amino-acid chain: R-phycoerythrin alpha chain (164 aa).

Residues C82 and C139 each contribute to the (2R,3E)-phycoerythrobilin site.

Belongs to the phycobiliprotein family. As to quaternary structure, heterodimer of an alpha and a beta chain. Post-translationally, contains two covalently linked bilin chromophores.

It localises to the plastid. It is found in the chloroplast thylakoid membrane. Light-harvesting photosynthetic bile pigment-protein from the phycobiliprotein complex. The protein is R-phycoerythrin alpha chain (cpeA) of Porphyra purpurea (Red seaweed).